A 236-amino-acid chain; its full sequence is 2,3,4,5-tetrahydropyridine-2,6-dicarboxylate N-acetyltransferase (236 aa).

It belongs to the transferase hexapeptide repeat family. DapH subfamily.

It carries out the reaction (S)-2,3,4,5-tetrahydrodipicolinate + acetyl-CoA + H2O = L-2-acetamido-6-oxoheptanedioate + CoA. It participates in amino-acid biosynthesis; L-lysine biosynthesis via DAP pathway; LL-2,6-diaminopimelate from (S)-tetrahydrodipicolinate (acetylase route): step 1/3. Functionally, catalyzes the transfer of an acetyl group from acetyl-CoA to tetrahydrodipicolinate. The polypeptide is 2,3,4,5-tetrahydropyridine-2,6-dicarboxylate N-acetyltransferase (Clostridium botulinum (strain 657 / Type Ba4)).